The following is a 124-amino-acid chain: Orexigenic neuropeptide QRFP (124 aa).

An N-terminal signal peptide occupies residues 1-17; sequence MRGFRPLLSLLLPLSAC. The propeptide occupies 18–79; that stretch reads FPLLDRRGPT…REHTGFRLGR (62 aa). A disordered region spans residues 63-101; that stretch reads REQQASHREHTGFRLGRQDGSSEAAGFLPADSEKASGPL. Residue Phe-122 is modified to Phenylalanine amide.

Belongs to the RFamide neuropeptide family. In terms of assembly, ligand for the G-protein coupled receptor QRFPR/GPR103. As to expression, expressed in the brain with highest levels in the periventricular hypothalamic nucleus and lateral hypothalamic areas. Expressed at moderate levels in the adrenal gland, eye, heart, intestine, liver, lung, kidney, mesenteric lymph node, ovary, placenta, Peyer patches, skin, spleen, stomach, testis, thymus and uterus.

The protein resides in the secreted. In terms of biological role, stimulates feeding and grooming behavior, metabolic rate and locomotor activity and increases blood pressure. May have orexigenic activity. May promote aldosterone secretion by the adrenal gland. The polypeptide is Orexigenic neuropeptide QRFP (Mus musculus (Mouse)).